Reading from the N-terminus, the 1081-residue chain is MEASAGLVAGSYRRNELVRIRHESDGGTKPLKNMNGQICQICGDDVGLAETGDVFVACNECAFPVCRPCYEYERKDGTQCCPQCKTRFRRHRGSPRVEGDEDEDDVDDIENEFNYAQGANKARHQRHGEEFSSSSRHESQPIPLLTHGHTVSGEIRTPDTQSVRTTSGPLGPSDRNAISSPYIDPRQPVPVRIVDPSKDLNSYGLGNVDWKERVEGWKLKQEKNMLQMTGKYHEGKGGEIEGTGSNGEELQMADDTRLPMSRVVPIPSSRLTPYRVVIILRLIILCFFLQYRTTHPVKNAYPLWLTSVICEIWFAFSWLLDQFPKWYPINRETYLDRLAIRYDRDGEPSQLVPVDVFVSTVDPLKEPPLVTANTVLSILSVDYPVDKVACYVSDDGSAMLTFESLSETAEFAKKWVPFCKKFNIEPRAPEFYFAQKIDYLKDKIQPSFVKERRAMKREYEEFKVRINALVAKAQKIPEEGWTMQDGTPWPGNNTRDHPGMIQVFLGHSGGLDTDGNELPRLIYVSREKRPGFQHHKKAGAMNALIRVSAVLTNGAYLLNVDCDHYFNNSKAIKEAMCFMMDPAIGKKCCYVQFPQRFDGIDLHDRYANRNIVFFDINMKGLDGIQGPVYVGTGCCFNRQALYGYDPVLTEEDLEPNIIVKSCCGSRKKGKSSKKYNYEKRRGINRSDSNAPLFNMEDIDEGFEGYDDERSILMSQRSVEKRFGQSPVFIAATFMEQGGIPPTTNPATLLKEAIHVISCGYEDKTEWGKEIGWIYGSVTEDILTGFKMHARGWISIYCNPPRPAFKGSAPINLSDRLNQVLRWALGSIEILLSRHCPIWYGYHGRLRLLERIAYINTIVYPITSIPLIAYCILPAFCLITDRFIIPEISNYASIWFILLFISIAVTGILELRWSGVSIEDWWRNEQFWVIGGTSAHLFAVFQGLLKVLAGIDTNFTVTSKATDEDGDFAELYIFKWTALLIPPTTVLLVNLIGIVAGVSYAVNSGYQSWGPLFGKLFFALWVIAHLYPFLKGLLGRQNRTPTIVIVWSVLLASIFSLLWVRINPFVDANPNANNFNGKGGVF.

Methionine 1 carries the post-translational modification N-acetylmethionine. Over methionine 1 to arginine 270 the chain is Cytoplasmic. The Zn(2+) site is built by cysteine 39, cysteine 42, cysteine 58, cysteine 61, cysteine 66, cysteine 69, cysteine 81, and cysteine 84. An RING-type; degenerate zinc finger spans residues cysteine 39 to lysine 85. A disordered region spans residues glycine 118–aspartate 195. Residues histidine 127–serine 139 are compositionally biased toward basic and acidic residues. Polar residues predominate over residues proline 158–glycine 168. The chain crosses the membrane as a helical span at residues leucine 271–tyrosine 291. The Extracellular segment spans residues arginine 292–asparagine 299. A helical transmembrane segment spans residues alanine 300–leucine 320. The Cytoplasmic portion of the chain corresponds to aspartate 321–threonine 856. Serine 359, lysine 365, glutamate 366, and aspartate 395 together coordinate UDP-alpha-D-glucose. Aspartate 395 is a catalytic residue. A coiled-coil region spans residues valine 449 to isoleucine 476. Lysine 536 is a UDP-alpha-D-glucose binding site. Lysine 537 and aspartate 561 together coordinate Mn(2+). Aspartate 780 is a catalytic residue. The chain crosses the membrane as a helical span at residues isoleucine 857–leucine 877. Residues isoleucine 878–asparagine 889 are Extracellular-facing. Residues tyrosine 890 to leucine 910 traverse the membrane as a helical segment. Residues arginine 911–glutamine 925 are Cytoplasmic-facing. Residues phenylalanine 926–valine 946 form a helical membrane-spanning segment. At leucine 947–threonine 976 the chain is on the extracellular side. Asparagine 953 is a glycosylation site (N-linked (GlcNAc...) asparagine). Residues alanine 977–valine 997 form a helical membrane-spanning segment. Over serine 998–tryptophan 1008 the chain is Cytoplasmic. Residues glycine 1009–leucine 1029 traverse the membrane as a helical segment. The Extracellular portion of the chain corresponds to lysine 1030–arginine 1038. Residues threonine 1039–valine 1059 form a helical membrane-spanning segment. Over arginine 1060–phenylalanine 1081 the chain is Cytoplasmic.

Belongs to the glycosyltransferase 2 family. Plant cellulose synthase subfamily. Interacts with CESA3 and CESA6. Assembly with CESA3 and CESA6 is required for functional complex in primary cell wall cellulose synthesis. Interacts with STL1 and STL2, but not with GOT1. Binds to CSI1. Interacts with PAT24/TIP1. Zn(2+) serves as cofactor. Mn(2+) is required as a cofactor. S-acylated. In terms of tissue distribution, expressed in germinating seeds, seedlings, roots, stems, shoots leaves and flowers, but not in mature flowers.

Its subcellular location is the cell membrane. It carries out the reaction [(1-&gt;4)-beta-D-glucosyl](n) + UDP-alpha-D-glucose = [(1-&gt;4)-beta-D-glucosyl](n+1) + UDP + H(+). The protein operates within glycan metabolism; plant cellulose biosynthesis. Its function is as follows. Catalytic subunit of cellulose synthase terminal complexes ('rosettes'), required for beta-1,4-glucan microfibril crystallization, a major mechanism of the cell wall formation. Involved in the primary cell wall formation. Required during embryogenesis for cell elongation, orientation of cell expansion and complex cell wall formations, such as interdigitated pattern of epidermal pavement cells, stomatal guard cells and trichomes. Plays a role in lateral roots formation, but seems not necessary for the development of tip-growing cells such as root hairs. The presence of each protein CESA1 and CESA6 is critical for cell expansion after germination. In Arabidopsis thaliana (Mouse-ear cress), this protein is Cellulose synthase A catalytic subunit 1 [UDP-forming].